A 470-amino-acid polypeptide reads, in one-letter code: MSQNIGKISQVIGAVIDVEFEPGKLPPIYNALRVTNPAIDDNENNLVLEVAQHLGENSVRTIAMDSTDGLVRGQAVLDTGKQISVPVGRKTLGRILNVIGEPVDEMGPVNADKEYGIHREAPEFVDQSTKVEAFTTGIKVVDLLAPYARGGKIGLFGGAGVGKTVLIMELINNIAKQHGGFSVFAGVGERTREGNDLWMEMKESGVLDKAALVYGQMNEPPGARARVALSALSIAEYFRDEEGQNVLLFIDNIFRFTQAGSEVSALLGRIPSAVGYQPTLATEMGELQERITSTNKGSITSVQAIYVPADDLTDPAPATAFAHLDATTVLSRQIAELGIYPAVDPLDSTSRILDPQVIGEEHYAIARQVQYVLQKYKDLQDIIAILGMDELSEEDKLVVARARKIQRFLSQPFHVAEAFTGSPGKYVELKDTIKGFKEIVDGKHDDIPEQAFYMVGTIEEAIEKAKKLAV.

157–164 (GGAGVGKT) serves as a coordination point for ATP.

The protein belongs to the ATPase alpha/beta chains family. As to quaternary structure, F-type ATPases have 2 components, CF(1) - the catalytic core - and CF(0) - the membrane proton channel. CF(1) has five subunits: alpha(3), beta(3), gamma(1), delta(1), epsilon(1). CF(0) has three main subunits: a(1), b(2) and c(9-12). The alpha and beta chains form an alternating ring which encloses part of the gamma chain. CF(1) is attached to CF(0) by a central stalk formed by the gamma and epsilon chains, while a peripheral stalk is formed by the delta and b chains.

It localises to the cell inner membrane. It carries out the reaction ATP + H2O + 4 H(+)(in) = ADP + phosphate + 5 H(+)(out). Produces ATP from ADP in the presence of a proton gradient across the membrane. The catalytic sites are hosted primarily by the beta subunits. The sequence is that of ATP synthase subunit beta from Geotalea daltonii (strain DSM 22248 / JCM 15807 / FRC-32) (Geobacter daltonii).